We begin with the raw amino-acid sequence, 556 residues long: Calcium-dependent protein kinase 5 (556 aa).

A disordered region spans residues Met-1–Pro-40. The N-myristoyl glycine moiety is linked to residue Gly-2. Residues Ser-8 to Ser-25 show a composition bias toward basic and acidic residues. Residues Lys-26–Ser-39 are compositionally biased toward low complexity. A Protein kinase domain is found at Tyr-97–Ile-355. Residues Leu-103–Thr-111 and Lys-126 contribute to the ATP site. The active-site Proton acceptor is Asp-221. Ser-261 bears the Phosphoserine mark. The interval Ala-361–Ile-391 is autoinhibitory domain. 4 EF-hand domains span residues Glu-398–Thr-433, Leu-434–Leu-469, Glu-470–Ala-505, and Leu-509–Gly-539. Positions 411, 413, 415, 422, 447, 449, 451, 453, 458, 483, 485, 487, 494, 517, 519, 521, 523, and 528 each coordinate Ca(2+).

It belongs to the protein kinase superfamily. Ser/Thr protein kinase family. CDPK subfamily.

Its subcellular location is the membrane. The enzyme catalyses L-seryl-[protein] + ATP = O-phospho-L-seryl-[protein] + ADP + H(+). The catalysed reaction is L-threonyl-[protein] + ATP = O-phospho-L-threonyl-[protein] + ADP + H(+). With respect to regulation, activated by calcium. Autophosphorylation may play an important role in the regulation of the kinase activity. Functionally, may play a role in signal transduction pathways that involve calcium as a second messenger. The polypeptide is Calcium-dependent protein kinase 5 (CPK5) (Arabidopsis thaliana (Mouse-ear cress)).